Consider the following 575-residue polypeptide: Methionine--tRNA ligase, mitochondrial (575 aa).

The short motif at 20–32 is the 'HIGH' region element; the sequence is PIFYPNAKPHLGH. Residues 341 to 345 carry the 'KMSKS' region motif; that stretch reads KMSKS. Lys-344 is a binding site for ATP.

It belongs to the class-I aminoacyl-tRNA synthetase family.

The protein localises to the mitochondrion matrix. The enzyme catalyses tRNA(Met) + L-methionine + ATP = L-methionyl-tRNA(Met) + AMP + diphosphate. Catalyzes the attachment of methionine to tRNA(Met) in the mitochondrion. This Saccharomyces cerevisiae (strain ATCC 204508 / S288c) (Baker's yeast) protein is Methionine--tRNA ligase, mitochondrial (MSM1).